The sequence spans 388 residues: tRNA (guanine(26)-N(2))-dimethyltransferase (388 aa).

One can recognise a Trm1 methyltransferase domain in the interval 7–381; it reads KTVEEGLTKI…APLKKIKEII (375 aa). 5 residues coordinate S-adenosyl-L-methionine: arginine 40, arginine 70, aspartate 88, aspartate 115, and alanine 116. 4 residues coordinate Zn(2+): cysteine 248, cysteine 251, cysteine 268, and cysteine 271.

Belongs to the class I-like SAM-binding methyltransferase superfamily. Trm1 family.

The catalysed reaction is guanosine(26) in tRNA + 2 S-adenosyl-L-methionine = N(2)-dimethylguanosine(26) in tRNA + 2 S-adenosyl-L-homocysteine + 2 H(+). Dimethylates a single guanine residue at position 26 of a number of tRNAs using S-adenosyl-L-methionine as donor of the methyl groups. The sequence is that of tRNA (guanine(26)-N(2))-dimethyltransferase from Methanobrevibacter smithii (strain ATCC 35061 / DSM 861 / OCM 144 / PS).